Here is a 220-residue protein sequence, read N- to C-terminus: Octanoyltransferase (220 aa).

A BPL/LPL catalytic domain is found at 31-206 (DDTPDEVWLV…ELVTLLDYEQ (176 aa)). Residues 70 to 77 (RGGQVTYH), 137 to 139 (SLG), and 150 to 152 (GLA) each bind substrate. The active-site Acyl-thioester intermediate is the C168.

It belongs to the LipB family.

It is found in the cytoplasm. The enzyme catalyses octanoyl-[ACP] + L-lysyl-[protein] = N(6)-octanoyl-L-lysyl-[protein] + holo-[ACP] + H(+). It functions in the pathway protein modification; protein lipoylation via endogenous pathway; protein N(6)-(lipoyl)lysine from octanoyl-[acyl-carrier-protein]: step 1/2. In terms of biological role, catalyzes the transfer of endogenously produced octanoic acid from octanoyl-acyl-carrier-protein onto the lipoyl domains of lipoate-dependent enzymes. Lipoyl-ACP can also act as a substrate although octanoyl-ACP is likely to be the physiological substrate. The polypeptide is Octanoyltransferase (Vibrio campbellii (strain ATCC BAA-1116)).